A 179-amino-acid chain; its full sequence is Large ribosomal subunit protein uL5 (179 aa).

This sequence belongs to the universal ribosomal protein uL5 family. Part of the 50S ribosomal subunit; part of the 5S rRNA/L5/L18/L25 subcomplex. Contacts the 5S rRNA and the P site tRNA. Forms a bridge to the 30S subunit in the 70S ribosome.

This is one of the proteins that bind and probably mediate the attachment of the 5S RNA into the large ribosomal subunit, where it forms part of the central protuberance. In the 70S ribosome it contacts protein S13 of the 30S subunit (bridge B1b), connecting the 2 subunits; this bridge is implicated in subunit movement. Contacts the P site tRNA; the 5S rRNA and some of its associated proteins might help stabilize positioning of ribosome-bound tRNAs. The chain is Large ribosomal subunit protein uL5 from Pseudomonas putida (strain ATCC 700007 / DSM 6899 / JCM 31910 / BCRC 17059 / LMG 24140 / F1).